Here is a 276-residue protein sequence, read N- to C-terminus: Glyoxal reductase (276 aa).

The active-site Proton donor is tyrosine 54. Histidine 112 lines the substrate pocket. 190–242 (SPLMQGQLLDNEVLTQIAEKHNKSVAQVILRWDLQHGVVTIPKSIKEHRIIEN) is a binding site for NADP(+).

It belongs to the aldo/keto reductase family.

It catalyses the reaction (S)-lactaldehyde + NADP(+) = methylglyoxal + NADPH + H(+). Functionally, reduces glyoxal and methylglyoxal (2-oxopropanal). Is not involved in the vitamin B6 biosynthesis. This is Glyoxal reductase (yvgN) from Bacillus subtilis (strain 168).